We begin with the raw amino-acid sequence, 117 residues long: Large ribosomal subunit protein uL18 (117 aa).

The protein belongs to the universal ribosomal protein uL18 family. Part of the 50S ribosomal subunit; part of the 5S rRNA/L5/L18/L25 subcomplex. Contacts the 5S and 23S rRNAs.

In terms of biological role, this is one of the proteins that bind and probably mediate the attachment of the 5S RNA into the large ribosomal subunit, where it forms part of the central protuberance. This Methylobacillus flagellatus (strain ATCC 51484 / DSM 6875 / VKM B-1610 / KT) protein is Large ribosomal subunit protein uL18.